The sequence spans 233 residues: Ribose-5-phosphate isomerase A (233 aa).

Substrate contacts are provided by residues 31–34 (SGST), 87–90 (DGAD), and 100–103 (KGGG). E109 acts as the Proton acceptor in catalysis. K127 is a substrate binding site.

This sequence belongs to the ribose 5-phosphate isomerase family. Homodimer.

The catalysed reaction is aldehydo-D-ribose 5-phosphate = D-ribulose 5-phosphate. Its pathway is carbohydrate degradation; pentose phosphate pathway; D-ribose 5-phosphate from D-ribulose 5-phosphate (non-oxidative stage): step 1/1. Its function is as follows. Catalyzes the reversible conversion of ribose-5-phosphate to ribulose 5-phosphate. This is Ribose-5-phosphate isomerase A from Chlamydia felis (strain Fe/C-56) (Chlamydophila felis).